Consider the following 51-residue polypeptide: Large ribosomal subunit protein bL32c (51 aa).

The protein belongs to the bacterial ribosomal protein bL32 family.

Its subcellular location is the plastid. The protein localises to the chloroplast. The sequence is that of Large ribosomal subunit protein bL32c from Oenothera elata subsp. hookeri (Hooker's evening primrose).